Consider the following 317-residue polypeptide: Aspartate carbamoyltransferase catalytic subunit (317 aa).

Positions 66 and 67 each coordinate carbamoyl phosphate. An L-aspartate-binding site is contributed by lysine 94. Residues arginine 116, histidine 144, and glutamine 147 each coordinate carbamoyl phosphate. L-aspartate contacts are provided by arginine 177 and arginine 231. Carbamoyl phosphate is bound by residues glycine 272 and proline 273.

This sequence belongs to the aspartate/ornithine carbamoyltransferase superfamily. ATCase family. As to quaternary structure, heterododecamer (2C3:3R2) of six catalytic PyrB chains organized as two trimers (C3), and six regulatory PyrI chains organized as three dimers (R2).

The catalysed reaction is carbamoyl phosphate + L-aspartate = N-carbamoyl-L-aspartate + phosphate + H(+). Its pathway is pyrimidine metabolism; UMP biosynthesis via de novo pathway; (S)-dihydroorotate from bicarbonate: step 2/3. Its function is as follows. Catalyzes the condensation of carbamoyl phosphate and aspartate to form carbamoyl aspartate and inorganic phosphate, the committed step in the de novo pyrimidine nucleotide biosynthesis pathway. The chain is Aspartate carbamoyltransferase catalytic subunit from Rhodopseudomonas palustris (strain BisB18).